The primary structure comprises 304 residues: Acetyl-coenzyme A carboxylase carboxyl transferase subunit beta (304 aa).

A CoA carboxyltransferase N-terminal domain is found at 25 to 294 (VWTKCDSCGQ…PSVVESKADT (270 aa)). C29, C32, C48, and C51 together coordinate Zn(2+). A C4-type zinc finger spans residues 29-51 (CDSCGQVLYRAELERNLEVCPKC).

The protein belongs to the AccD/PCCB family. Acetyl-CoA carboxylase is a heterohexamer composed of biotin carboxyl carrier protein (AccB), biotin carboxylase (AccC) and two subunits each of ACCase subunit alpha (AccA) and ACCase subunit beta (AccD). The cofactor is Zn(2+).

The protein resides in the cytoplasm. The enzyme catalyses N(6)-carboxybiotinyl-L-lysyl-[protein] + acetyl-CoA = N(6)-biotinyl-L-lysyl-[protein] + malonyl-CoA. Its pathway is lipid metabolism; malonyl-CoA biosynthesis; malonyl-CoA from acetyl-CoA: step 1/1. Component of the acetyl coenzyme A carboxylase (ACC) complex. Biotin carboxylase (BC) catalyzes the carboxylation of biotin on its carrier protein (BCCP) and then the CO(2) group is transferred by the transcarboxylase to acetyl-CoA to form malonyl-CoA. This is Acetyl-coenzyme A carboxylase carboxyl transferase subunit beta from Yersinia pseudotuberculosis serotype O:1b (strain IP 31758).